Consider the following 98-residue polypeptide: Large ribosomal subunit protein uL23 (98 aa).

It belongs to the universal ribosomal protein uL23 family. As to quaternary structure, part of the 50S ribosomal subunit. Contacts protein L29, and trigger factor when it is bound to the ribosome.

In terms of biological role, one of the early assembly proteins it binds 23S rRNA. One of the proteins that surrounds the polypeptide exit tunnel on the outside of the ribosome. Forms the main docking site for trigger factor binding to the ribosome. This is Large ribosomal subunit protein uL23 from Legionella pneumophila (strain Paris).